Here is a 215-residue protein sequence, read N- to C-terminus: Cytochrome b6 (215 aa).

A helical membrane pass occupies residues Ile32 to Phe52. Position 35 (Cys35) interacts with heme c. Positions 86 and 100 each coordinate heme b. Transmembrane regions (helical) follow at residues Ala90–Phe110, Leu116–Tyr136, and Leu186–Ile206. Heme b-binding residues include His187 and His202.

This sequence belongs to the cytochrome b family. PetB subfamily. In terms of assembly, the 4 large subunits of the cytochrome b6-f complex are cytochrome b6, subunit IV (17 kDa polypeptide, PetD), cytochrome f and the Rieske protein, while the 4 small subunits are PetG, PetL, PetM and PetN. The complex functions as a dimer. The cofactor is heme b. Requires heme c as cofactor.

Its subcellular location is the plastid. The protein localises to the chloroplast thylakoid membrane. In terms of biological role, component of the cytochrome b6-f complex, which mediates electron transfer between photosystem II (PSII) and photosystem I (PSI), cyclic electron flow around PSI, and state transitions. This Eucalyptus globulus subsp. globulus (Tasmanian blue gum) protein is Cytochrome b6.